The chain runs to 176 residues: Lipoprotein signal peptidase (176 aa).

4 helical membrane-spanning segments follow: residues 10–30, 48–68, 78–98, and 102–122; these read LFQF…AIVL, VPVL…AFSF, YFFT…LLRM, and MVVL…NLID. Catalysis depends on residues D131 and D149. Residues 141–161 traverse the membrane as a helical segment; the sequence is HFPAFNIADSAITLGTILLLI.

Belongs to the peptidase A8 family.

The protein resides in the cell inner membrane. The catalysed reaction is Release of signal peptides from bacterial membrane prolipoproteins. Hydrolyzes -Xaa-Yaa-Zaa-|-(S,diacylglyceryl)Cys-, in which Xaa is hydrophobic (preferably Leu), and Yaa (Ala or Ser) and Zaa (Gly or Ala) have small, neutral side chains.. It participates in protein modification; lipoprotein biosynthesis (signal peptide cleavage). Functionally, this protein specifically catalyzes the removal of signal peptides from prolipoproteins. This chain is Lipoprotein signal peptidase, found in Acinetobacter baumannii (strain SDF).